We begin with the raw amino-acid sequence, 411 residues long: Imidazolonepropionase (411 aa).

Positions 78 and 80 each coordinate Fe(3+). Zn(2+)-binding residues include His-78 and His-80. 4-imidazolone-5-propanoate is bound by residues Arg-87, Tyr-150, and His-183. Tyr-150 lines the N-formimidoyl-L-glutamate pocket. His-248 lines the Fe(3+) pocket. His-248 lines the Zn(2+) pocket. Gln-251 serves as a coordination point for 4-imidazolone-5-propanoate. Asp-322 lines the Fe(3+) pocket. Residue Asp-322 coordinates Zn(2+). The N-formimidoyl-L-glutamate site is built by Asn-324 and Gly-326. Residue Ser-327 coordinates 4-imidazolone-5-propanoate.

This sequence belongs to the metallo-dependent hydrolases superfamily. HutI family. Zn(2+) is required as a cofactor. The cofactor is Fe(3+).

The protein localises to the cytoplasm. It carries out the reaction 4-imidazolone-5-propanoate + H2O = N-formimidoyl-L-glutamate. Its pathway is amino-acid degradation; L-histidine degradation into L-glutamate; N-formimidoyl-L-glutamate from L-histidine: step 3/3. Its function is as follows. Catalyzes the hydrolytic cleavage of the carbon-nitrogen bond in imidazolone-5-propanoate to yield N-formimidoyl-L-glutamate. It is the third step in the universal histidine degradation pathway. This Christiangramia forsetii (strain DSM 17595 / CGMCC 1.15422 / KT0803) (Gramella forsetii) protein is Imidazolonepropionase.